Reading from the N-terminus, the 636-residue chain is Threonine--tRNA ligase (636 aa).

Residues 1–63 (MPMITITLPD…EHDASLRIIT (63 aa)) form the TGS domain. The interval 245-536 (DHRKIGKAQD…LIEHHAGAFP (292 aa)) is catalytic. Zn(2+)-binding residues include C336, H387, and H513.

This sequence belongs to the class-II aminoacyl-tRNA synthetase family. Homodimer. It depends on Zn(2+) as a cofactor.

The protein resides in the cytoplasm. It catalyses the reaction tRNA(Thr) + L-threonine + ATP = L-threonyl-tRNA(Thr) + AMP + diphosphate + H(+). Its function is as follows. Catalyzes the attachment of threonine to tRNA(Thr) in a two-step reaction: L-threonine is first activated by ATP to form Thr-AMP and then transferred to the acceptor end of tRNA(Thr). Also edits incorrectly charged L-seryl-tRNA(Thr). The polypeptide is Threonine--tRNA ligase (Xanthomonas campestris pv. campestris (strain 8004)).